The sequence spans 360 residues: Glutaminyl-peptide cyclotransferase (360 aa).

The first 23 residues, Met-1–Cys-23, serve as a signal peptide directing secretion. N-linked (GlcNAc...) asparagine glycosylation is present at Asn-135. A Zn(2+)-binding site is contributed by Asp-165. The Proton acceptor role is filled by Glu-199. Glu-200 contributes to the Zn(2+) binding site. The active-site Proton acceptor is the Asp-251. His-330 provides a ligand contact to Zn(2+).

The protein belongs to the glutaminyl-peptide cyclotransferase family.

It localises to the secreted. It carries out the reaction N-terminal L-glutaminyl-[peptide] = N-terminal 5-oxo-L-prolyl-[peptide] + NH4(+). Responsible for the biosynthesis of pyroglutamyl peptides. Has a bias against acidic and tryptophan residues adjacent to the N-terminal glutaminyl residue and a lack of importance of chain length after the second residue. Also catalyzes N-terminal pyroglutamate formation. This chain is Glutaminyl-peptide cyclotransferase (qpct), found in Dictyostelium discoideum (Social amoeba).